A 288-amino-acid polypeptide reads, in one-letter code: Protoheme IX farnesyltransferase (288 aa).

Helical transmembrane passes span Ile-8–Ala-28, Val-35–Phe-55, Ile-75–Leu-95, Phe-105–Leu-125, Ser-130–Cys-150, Phe-161–Val-181, Ile-205–Gly-225, Asn-230–Phe-250, and Ile-265–Lys-285.

Belongs to the UbiA prenyltransferase family. Protoheme IX farnesyltransferase subfamily.

It localises to the cell membrane. The enzyme catalyses heme b + (2E,6E)-farnesyl diphosphate + H2O = Fe(II)-heme o + diphosphate. The protein operates within porphyrin-containing compound metabolism; heme O biosynthesis; heme O from protoheme: step 1/1. Its function is as follows. Converts heme B (protoheme IX) to heme O by substitution of the vinyl group on carbon 2 of heme B porphyrin ring with a hydroxyethyl farnesyl side group. The polypeptide is Protoheme IX farnesyltransferase (Wigglesworthia glossinidia brevipalpis).